Here is a 315-residue protein sequence, read N- to C-terminus: tRNA-cytidine(32) 2-sulfurtransferase (315 aa).

A PP-loop motif motif is present at residues 54 to 59 (SGGKDS). Residues cysteine 129, cysteine 132, and cysteine 220 each coordinate [4Fe-4S] cluster.

The protein belongs to the TtcA family. As to quaternary structure, homodimer. Requires Mg(2+) as cofactor. The cofactor is [4Fe-4S] cluster.

Its subcellular location is the cytoplasm. It catalyses the reaction cytidine(32) in tRNA + S-sulfanyl-L-cysteinyl-[cysteine desulfurase] + AH2 + ATP = 2-thiocytidine(32) in tRNA + L-cysteinyl-[cysteine desulfurase] + A + AMP + diphosphate + H(+). It participates in tRNA modification. Functionally, catalyzes the ATP-dependent 2-thiolation of cytidine in position 32 of tRNA, to form 2-thiocytidine (s(2)C32). The sulfur atoms are provided by the cysteine/cysteine desulfurase (IscS) system. The polypeptide is tRNA-cytidine(32) 2-sulfurtransferase (Bordetella avium (strain 197N)).